The primary structure comprises 274 residues: Diaminopimelate epimerase (274 aa).

N11, Q44, and N64 together coordinate substrate. C73 functions as the Proton donor in the catalytic mechanism. Residues 74–75 (GN), N157, N190, and 208–209 (ER) each bind substrate. The active-site Proton acceptor is C217. Residue 218 to 219 (GS) participates in substrate binding.

It belongs to the diaminopimelate epimerase family. Homodimer.

It localises to the cytoplasm. It carries out the reaction (2S,6S)-2,6-diaminopimelate = meso-2,6-diaminopimelate. The protein operates within amino-acid biosynthesis; L-lysine biosynthesis via DAP pathway; DL-2,6-diaminopimelate from LL-2,6-diaminopimelate: step 1/1. Its function is as follows. Catalyzes the stereoinversion of LL-2,6-diaminopimelate (L,L-DAP) to meso-diaminopimelate (meso-DAP), a precursor of L-lysine and an essential component of the bacterial peptidoglycan. The protein is Diaminopimelate epimerase of Actinobacillus pleuropneumoniae serotype 3 (strain JL03).